A 35-amino-acid chain; its full sequence is Putative gastric cancer-related gene 224 protein (35 aa).

Expressed in gastric mucosa.

The chain is Putative gastric cancer-related gene 224 protein (GCRG224) from Homo sapiens (Human).